An 818-amino-acid polypeptide reads, in one-letter code: Sodium/hydrogen exchanger 1 (818 aa).

Residues 1 to 98 lie on the Extracellular side of the membrane; sequence MLLWSGICGL…FPVLGIDYTH (98 aa). Positions 39 to 76 are disordered; it reads PSPTASTIRGSEPPRERSIGDVTTAPPELAPESRPVNH. The N-linked (GlcNAc...) asparagine glycan is linked to N75. A helical membrane pass occupies residues 99 to 121; the sequence is VRTPFEISLWILLACLMKIGFHV. The Cytoplasmic portion of the chain corresponds to 122 to 130; that stretch reads IPTISSIVP. Residues 131 to 148 form a helical membrane-spanning segment; it reads ESCLLIVVGLLVGGLIKA. Residues 149–158 lie on the Extracellular side of the membrane; the sequence is VGETPPFLQS. A helical membrane pass occupies residues 159–176; that stretch reads EVFFLFLLPPIILDAGYF. The Cytoplasmic portion of the chain corresponds to 177–186; sequence LPLRQFTENL. Residues 187 to 215 traverse the membrane as a helical segment; it reads GTILIFAVVGTLWNAFFLGGLMYAVCLVG. Residues 216 to 222 are Extracellular-facing; sequence GEQINNI. Residues 223 to 249 form a helical membrane-spanning segment; it reads GLLDNLLFGSIISAVDPVAVLAVFEEI. The Cytoplasmic portion of the chain corresponds to 250–252; the sequence is HIN. The helical transmembrane segment at 253 to 283 threads the bilayer; sequence ELLHILVFGESLLNDAVTVVLYHLFEEFANY. Over 284–287 the chain is Extracellular; sequence DRVG. A helical transmembrane segment spans residues 288–322; the sequence is IVDIVLGFLSFFVVSLGGVFVGVVYGVIAAFTSRF. Over 323 to 328 the chain is Cytoplasmic; the sequence is TSHIRV. A helical membrane pass occupies residues 329–341; that stretch reads IEPLFVFLYSYMA. Topologically, residues 342–350 are extracellular; sequence YLSAELFHL. The chain crosses the membrane as a helical span at residues 351–371; it reads SGIMALIASGVVMRPYVEANI. At 372–373 the chain is on the cytoplasmic side; it reads SH. The chain crosses the membrane as a helical span at residues 374 to 404; the sequence is KSHTTIKYFLKMWSSVSETLIFIFLGVSTVA. Over 405-410 the chain is Extracellular; the sequence is GSHHWN. The chain crosses the membrane as a helical span at residues 411–438; that stretch reads WTFVISTLLFCLIARVLGVLGLTWFINK. Over 439 to 444 the chain is Cytoplasmic; sequence FRIVKL. The chain crosses the membrane as a helical span at residues 445 to 469; sequence TPKDQFIIAYGGLRGAIAFSLGHLL. The Extracellular segment spans residues 470–475; the sequence is DKNHFP. Residues 476–505 traverse the membrane as a helical segment; the sequence is MCDLFLTAIITVIFFTVFVQGMTIRPLVDL. Residues 503 to 545 form an interaction with TESC region; it reads VDLLAVKKKQETKRSINEEIHTQFLDHLLTGIEDICGHYGHHH. Residues 506–818 are Cytoplasmic-facing; it reads LAVKKKQETK…EGEPFIPKGQ (313 aa). Residues 509–516 form a PI(4,5)P2-binding region region; it reads KKKQETKR. Residues 515–545 are interaction with CHP2; sequence KRSINEEIHTQFLDHLLTGIEDICGHYGHHH. The interval 540–545 is confers pH-dependent PI(4,5)P2 binding; that stretch reads HYGHHH. Positions 552–560 are PI(4,5)P2-binding region; it reads RFNKKYVKK. Phosphoserine is present on residues S599 and S602. T603 is modified (phosphothreonine). S605 and S648 each carry phosphoserine. Residues 633–818 are interaction with TESC; sequence KILRNNLQKT…EGEPFIPKGQ (186 aa). Positions 633 to 818 are interaction with CALM1; sequence KILRNNLQKT…EGEPFIPKGQ (186 aa). The interval 684–687 is interaction with PPP3CA; sequence LTVP. Phosphoserine occurs at positions 693, 697, and 703. The interval 715–720 is interaction with PPP3CA; the sequence is PVITID. 3 positions are modified to phosphoserine: S723, S726, and S729. The tract at residues 739–818 is disordered; sequence GKVLGLSREP…EGEPFIPKGQ (80 aa). T752 and T782 each carry phosphothreonine. Positions 785-794 are enriched in polar residues; that stretch reads PSDSPSSQRI. S788, S790, and S799 each carry phosphoserine.

This sequence belongs to the monovalent cation:proton antiporter 1 (CPA1) transporter (TC 2.A.36) family. Homodimer; dimerization is crucial for its function. Oligomer. Interacts with CALM in a calcium-dependent manner. Interacts with TESC. Interacts (via the juxtamembrane region of the cytoplasmic C-terminal domain) with CHP1; the interaction occurs at the plasma membrane in a calcium-dependent manner. Interacts with CHP2; the interaction occurs in a calcium-dependent manner. Interacts with EZR; regulates the cytoskeletal interactions of SLC9A1 and promotes stress fiber formation. In terms of processing, ubiquitinated, leading to its degradation by the proteasome. Ubiquitination is reduced by CHP1. Post-translationally, O-glycosylated. Palmitoylated; may play a major role in SLC9A1 regulation. In terms of processing, phosphorylation at Thr-782 increases SLC9A1 activity. Specifically dephosphorylated at Thr-782 by PPP3CA that negatively regulates SLC9A1 activity. Phosphorylation at Ser-648 by AKT1 reduces SLC9A1 binding to CALM1.

It localises to the cell membrane. The protein resides in the basolateral cell membrane. The catalysed reaction is Na(+)(in) + H(+)(out) = Na(+)(out) + H(+)(in). It carries out the reaction Li(+)(out) + H(+)(in) = Li(+)(in) + H(+)(out). The enzyme catalyses Li(+)(in) + Na(+)(out) = Li(+)(out) + Na(+)(in). Activated at acidic pHs. Inhibited by cariporide and eniporide. Inhibited by amiloride and 5-amino-substituted derivatives. Phosphatidylinositol 4,5-bisphosphate (PI(4,5)P2) and phosphatidylinositol 3,4,5-trisphosphate (PI(3,4,5)P3) bind and differentially regulate SLC9A1 activity. In terms of biological role, electroneutral Na(+) /H(+) antiporter that extrudes Na(+) in exchange for external protons driven by the inward sodium ion chemical gradient, protecting cells from acidification that occurs from metabolism. Exchanges intracellular H(+) ions for extracellular Na(+) in 1:1 stoichiometry. Plays a key role in maintening intracellular pH neutral and cell volume, and thus is important for cell growth, proliferation, migration and survival. In addition, can transport lithium Li(+) and also functions as a Na(+)/Li(+) antiporter. SLC9A1 also functions in membrane anchoring and organization of scaffolding complexes that coordinate signaling inputs. In Sus scrofa (Pig), this protein is Sodium/hydrogen exchanger 1 (SLC9A1).